Reading from the N-terminus, the 316-residue chain is N-acetylmuramic acid 6-phosphate etherase (316 aa).

The region spanning 68–231 (ITDRLRSGGR…STCAMVRLGK (164 aa)) is the SIS domain. The Proton donor role is filled by Glu96. The active site involves Glu127.

It belongs to the GCKR-like family. MurNAc-6-P etherase subfamily. In terms of assembly, homodimer.

The enzyme catalyses N-acetyl-D-muramate 6-phosphate + H2O = N-acetyl-D-glucosamine 6-phosphate + (R)-lactate. Its pathway is amino-sugar metabolism; N-acetylmuramate degradation. Its function is as follows. Specifically catalyzes the cleavage of the D-lactyl ether substituent of MurNAc 6-phosphate, producing GlcNAc 6-phosphate and D-lactate. The polypeptide is N-acetylmuramic acid 6-phosphate etherase (Prochlorococcus marinus (strain MIT 9313)).